Here is a 165-residue protein sequence, read N- to C-terminus: Thiol peroxidase (165 aa).

Residues 18–164 (RKVGDKAPNF…YEAAIEAAKK (147 aa)) enclose the Thioredoxin domain. Catalysis depends on C60, which acts as the Cysteine sulfenic acid (-SOH) intermediate. A disulfide bond links C60 and C94.

The protein belongs to the peroxiredoxin family. Tpx subfamily. In terms of assembly, homodimer.

The catalysed reaction is a hydroperoxide + [thioredoxin]-dithiol = an alcohol + [thioredoxin]-disulfide + H2O. Functionally, thiol-specific peroxidase that catalyzes the reduction of hydrogen peroxide and organic hydroperoxides to water and alcohols, respectively. Plays a role in cell protection against oxidative stress by detoxifying peroxides. This is Thiol peroxidase from Listeria monocytogenes serovar 1/2a (strain ATCC BAA-679 / EGD-e).